The primary structure comprises 490 residues: Serine hydroxymethyltransferase, mitochondrial (490 aa).

The transit peptide at 1-20 (MFPRASALAKCMATVHRRGL) directs the protein to the mitochondrion. At Lys-265 the chain carries N6-(pyridoxal phosphate)lysine.

It belongs to the SHMT family. Homotetramer. Interacts with NAP1. The cofactor is pyridoxal 5'-phosphate.

The protein resides in the mitochondrion. It carries out the reaction (6R)-5,10-methylene-5,6,7,8-tetrahydrofolate + glycine + H2O = (6S)-5,6,7,8-tetrahydrofolate + L-serine. It functions in the pathway one-carbon metabolism; tetrahydrofolate interconversion. Interconversion of serine and glycine. The protein is Serine hydroxymethyltransferase, mitochondrial (SHM1) of Saccharomyces cerevisiae (strain ATCC 204508 / S288c) (Baker's yeast).